Reading from the N-terminus, the 327-residue chain is uncharacterized protein (327 aa).

The chain crosses the membrane as a helical span at residues Ile-13 to Lys-33.

The protein localises to the membrane. This is an uncharacterized protein from Caenorhabditis elegans.